A 223-amino-acid polypeptide reads, in one-letter code: ATP-dependent Clp protease proteolytic subunit 2 (223 aa).

Residues 1-40 are disordered; that stretch reads MHAGSGNDMDITRMTPTRLDDEPDAPEPETREDDNKTLNS. Acidic residues predominate over residues 21–32; the sequence is DEPDAPEPETRE. The Nucleophile role is filled by Ser124. His149 is a catalytic residue.

This sequence belongs to the peptidase S14 family. Fourteen ClpP subunits assemble into 2 heptameric rings which stack back to back to give a disk-like structure with a central cavity, resembling the structure of eukaryotic proteasomes.

Its subcellular location is the cytoplasm. It carries out the reaction Hydrolysis of proteins to small peptides in the presence of ATP and magnesium. alpha-casein is the usual test substrate. In the absence of ATP, only oligopeptides shorter than five residues are hydrolyzed (such as succinyl-Leu-Tyr-|-NHMec, and Leu-Tyr-Leu-|-Tyr-Trp, in which cleavage of the -Tyr-|-Leu- and -Tyr-|-Trp bonds also occurs).. Functionally, cleaves peptides in various proteins in a process that requires ATP hydrolysis. Has a chymotrypsin-like activity. Plays a major role in the degradation of misfolded proteins. This chain is ATP-dependent Clp protease proteolytic subunit 2, found in Gluconobacter oxydans (strain 621H) (Gluconobacter suboxydans).